Consider the following 344-residue polypeptide: Arginine N-succinyltransferase (344 aa).

Position 125 (Leu-125) interacts with succinyl-CoA. His-229 serves as the catalytic Proton donor.

This sequence belongs to the arginine N-succinyltransferase family.

The catalysed reaction is succinyl-CoA + L-arginine = N(2)-succinyl-L-arginine + CoA + H(+). It functions in the pathway amino-acid degradation; L-arginine degradation via AST pathway; L-glutamate and succinate from L-arginine: step 1/5. Catalyzes the transfer of succinyl-CoA to arginine to produce N(2)-succinylarginine. In Escherichia coli O6:K15:H31 (strain 536 / UPEC), this protein is Arginine N-succinyltransferase.